The following is a 529-amino-acid chain: Cytochrome P450 monooxygenase atmQ (529 aa).

Helical transmembrane passes span 22 to 42 (YPFA…QQLA) and 51 to 71 (SWVN…IAAF). Cys-467 serves as a coordination point for heme.

The protein belongs to the cytochrome P450 family. Heme is required as a cofactor.

Its subcellular location is the membrane. The protein operates within secondary metabolite biosynthesis. Cytochrome P450 monooxygenase; part of the ATM2 gene cluster that mediates the biosynthesis of aflatrem, a tremorgenic mycotoxin with acute neurotoxic effects. Synthesis of geranylgeranyl diphosphate (GGPP) by AtmG (a GGPP synthase) precedes condensation of GGPP with indole 3-glycerol phosphate, followed by epoxidation and cyclization by AtmM (a FAD-dependent monooxygenase) and AtmC (a prenyltransferase) to produce paspaline. AtmB is also essential for paspaline production, but its exact role has not been identified yet. AtmP, a cytochrome P450 monooxygenase, subsequently converts paspaline to 13-desoxypaxilline via PC-M6 by removal of the C-30 methyl group and oxidation at C-10. AtmQ, a cytochrome P450 monooxygenase, then catalyzes the oxidation of 13-desoxypaxilline, first at C-7 to produce paspalicine and then at C-13 to form paspalinine. Finally, AtmD prenylates paspalinine to form aflatrem. This chain is Cytochrome P450 monooxygenase atmQ, found in Aspergillus flavus.